A 498-amino-acid chain; its full sequence is Dynein regulatory complex subunit 5 (498 aa).

Disordered regions lie at residues 27–52 (ALGS…LKTK) and 200–223 (MPTP…EPEK). The segment covering 28–47 (LGSSSTGPTSLKTSSTPTPG) has biased composition (low complexity). LRR repeat units follow at residues 276–299 (CHTL…ILIR), 306–327 (ALEE…AAAK), 333–353 (RLRV…QSLA), 361–382 (NLVF…AIAH), 389–409 (CLSV…TLLS), and 417–438 (TLVS…QLLE).

Belongs to the DRC5 family. As to quaternary structure, component of the nexin-dynein regulatory complex (N-DRC). Interacts with DRC1. Interacts with FBXL13/DRC6, DRC3 and DRC7. Testis-specific (at protein level).

Its subcellular location is the cell projection. The protein localises to the cilium. It localises to the flagellum. It is found in the cytoplasm. The protein resides in the cytoskeleton. Its subcellular location is the flagellum axoneme. In terms of biological role, component of the nexin-dynein regulatory complex (N-DRC) a key regulator of ciliary/flagellar motility which maintains the alignment and integrity of the distal axoneme and regulates microtubule sliding in motile axonemes. May play a role in the assembly of N-DRC. Required for sperm motility. This is Dynein regulatory complex subunit 5 (Tcte1) from Mus musculus (Mouse).